The following is a 254-amino-acid chain: Uracil-DNA glycosylase (254 aa).

D91 acts as the Proton acceptor in catalysis.

This sequence belongs to the uracil-DNA glycosylase (UDG) superfamily. UNG family.

Its subcellular location is the host nucleus. It carries out the reaction Hydrolyzes single-stranded DNA or mismatched double-stranded DNA and polynucleotides, releasing free uracil.. Excises uracil residues from the DNA which can arise as a result of misincorporation of dUMP residues by DNA polymerase or deamination of cytosines. Therefore may reduce deleterious uracil incorporation into the viral genome, particularly in terminally differentiated cells which lack DNA repair enzymes. The polypeptide is Uracil-DNA glycosylase (U81) (Homo sapiens (Human)).